A 1056-amino-acid polypeptide reads, in one-letter code: Carbamoyl phosphate synthase large chain (1056 aa).

The tract at residues 1–397 is carboxyphosphate synthetic domain; it reads MPRRTDIKKV…GFKKALRSID (397 aa). Positions 127, 167, 173, 174, 206, 208, 213, 239, 240, 241, 282, and 294 each coordinate ATP. In terms of domain architecture, ATP-grasp 1 spans 131–323; it reads KALMQKIGEP…IARVAAKIAI (193 aa). Residues glutamine 282, glutamate 294, and asparagine 296 each contribute to the Mg(2+) site. Glutamine 282, glutamate 294, and asparagine 296 together coordinate Mn(2+). Residues 398-530 form an oligomerization domain region; sequence TDINTHTNHN…YSTHGVTTDI (133 aa). Residues 531-919 form a carbamoyl phosphate synthetic domain region; the sequence is IQNDKKKVLI…YKACISADNE (389 aa). Positions 661-852 constitute an ATP-grasp 2 domain; the sequence is SELLDALKIP…LAKVAAKVMI (192 aa). Positions 697, 736, 738, 743, 768, 769, 770, 771, 811, and 823 each coordinate ATP. Residues glutamine 811, glutamate 823, and asparagine 825 each contribute to the Mg(2+) site. Mn(2+)-binding residues include glutamine 811, glutamate 823, and asparagine 825. The MGS-like domain maps to 918–1056; sequence NELPIEGNVF…PISHYLSEVE (139 aa). The segment at 920-1056 is allosteric domain; sequence LPIEGNVFIS…PISHYLSEVE (137 aa).

It belongs to the CarB family. As to quaternary structure, composed of two chains; the small (or glutamine) chain promotes the hydrolysis of glutamine to ammonia, which is used by the large (or ammonia) chain to synthesize carbamoyl phosphate. Tetramer of heterodimers (alpha,beta)4. It depends on Mg(2+) as a cofactor. Requires Mn(2+) as cofactor.

It catalyses the reaction hydrogencarbonate + L-glutamine + 2 ATP + H2O = carbamoyl phosphate + L-glutamate + 2 ADP + phosphate + 2 H(+). It carries out the reaction hydrogencarbonate + NH4(+) + 2 ATP = carbamoyl phosphate + 2 ADP + phosphate + 2 H(+). The protein operates within amino-acid biosynthesis; L-arginine biosynthesis; carbamoyl phosphate from bicarbonate: step 1/1. It participates in pyrimidine metabolism; UMP biosynthesis via de novo pathway; (S)-dihydroorotate from bicarbonate: step 1/3. Functionally, large subunit of the glutamine-dependent carbamoyl phosphate synthetase (CPSase). CPSase catalyzes the formation of carbamoyl phosphate from the ammonia moiety of glutamine, carbonate, and phosphate donated by ATP, constituting the first step of 2 biosynthetic pathways, one leading to arginine and/or urea and the other to pyrimidine nucleotides. The large subunit (synthetase) binds the substrates ammonia (free or transferred from glutamine from the small subunit), hydrogencarbonate and ATP and carries out an ATP-coupled ligase reaction, activating hydrogencarbonate by forming carboxy phosphate which reacts with ammonia to form carbamoyl phosphate. In Methanosphaerula palustris (strain ATCC BAA-1556 / DSM 19958 / E1-9c), this protein is Carbamoyl phosphate synthase large chain.